Consider the following 300-residue polypeptide: MNTLVLKIDAILSKHLKKQLASYTISSQNTYVAFAAKKNGVTVLLYKSGKLVLQGNGANALAQELNLPVAKTVFEASNNSQDIPIIGSDEVGNGSYFGGIAVVASFVDPKDHSFLKKLGVDDSKKLSDKTIQQIAPLLEKQIPHQSLLLSPKKYNELVGKSKPYNAISIKVALHNQAIFLLLQKGIQPKQIVIDAFTSQSNYEKHLKKEKNHFPNPLTFQEKAESHYLAVAVSSIIARNLFLDNLDQLGQDLGYQLPSGAGSASDKVASQLLAAYGMSSLEYSAKLHFANTHKAQALLTK.

The 218-residue stretch at 83–300 folds into the RNase H type-2 domain; it reads IPIIGSDEVG…THKAQALLTK (218 aa). Residues D89, E90, and D194 each contribute to the a divalent metal cation site.

The protein belongs to the RNase HII family. RnhC subfamily. Mn(2+) is required as a cofactor. Mg(2+) serves as cofactor.

The protein localises to the cytoplasm. It catalyses the reaction Endonucleolytic cleavage to 5'-phosphomonoester.. Functionally, endonuclease that specifically degrades the RNA of RNA-DNA hybrids. This Streptococcus pyogenes serotype M12 (strain MGAS2096) protein is Ribonuclease HIII.